A 429-amino-acid polypeptide reads, in one-letter code: Adenylosuccinate synthetase (429 aa).

Residues 12–18 (GDEGKGK) and 40–42 (GHT) contribute to the GTP site. Residue Asp13 is the Proton acceptor of the active site. Positions 13 and 40 each coordinate Mg(2+). IMP-binding positions include 13–16 (DEGK), 38–41 (NAGH), Thr128, Arg142, Gln223, Thr238, and Arg302. His41 serves as the catalytic Proton donor. Substrate is bound at residue 298–304 (VNTGRPR). GTP-binding positions include Arg304, 330 to 332 (KLD), and 412 to 414 (GVG).

This sequence belongs to the adenylosuccinate synthetase family. As to quaternary structure, homodimer. Mg(2+) is required as a cofactor.

Its subcellular location is the cytoplasm. The enzyme catalyses IMP + L-aspartate + GTP = N(6)-(1,2-dicarboxyethyl)-AMP + GDP + phosphate + 2 H(+). The protein operates within purine metabolism; AMP biosynthesis via de novo pathway; AMP from IMP: step 1/2. Functionally, plays an important role in the de novo pathway of purine nucleotide biosynthesis. Catalyzes the first committed step in the biosynthesis of AMP from IMP. This is Adenylosuccinate synthetase from Renibacterium salmoninarum (strain ATCC 33209 / DSM 20767 / JCM 11484 / NBRC 15589 / NCIMB 2235).